The primary structure comprises 349 residues: Small ribosomal subunit biogenesis GTPase RsgA (349 aa).

The segment covering Met-1 to Gln-11 has biased composition (basic residues). The disordered stretch occupies residues Met-1–Gln-35. The region spanning Tyr-111–Phe-272 is the CP-type G domain. GTP-binding positions include Asn-158 to Asp-161 and Gly-212 to Ser-220. 4 residues coordinate Zn(2+): Cys-296, Cys-301, His-303, and Cys-309.

Belongs to the TRAFAC class YlqF/YawG GTPase family. RsgA subfamily. In terms of assembly, monomer. Associates with 30S ribosomal subunit, binds 16S rRNA. The cofactor is Zn(2+).

The protein localises to the cytoplasm. In terms of biological role, one of several proteins that assist in the late maturation steps of the functional core of the 30S ribosomal subunit. Helps release RbfA from mature subunits. May play a role in the assembly of ribosomal proteins into the subunit. Circularly permuted GTPase that catalyzes slow GTP hydrolysis, GTPase activity is stimulated by the 30S ribosomal subunit. The chain is Small ribosomal subunit biogenesis GTPase RsgA from Dickeya dadantii (strain 3937) (Erwinia chrysanthemi (strain 3937)).